We begin with the raw amino-acid sequence, 231 residues long: Phosphatidylserine decarboxylase proenzyme (231 aa).

The Schiff-base intermediate with substrate; via pyruvic acid role is filled by Ser-188. Residue Ser-188 is modified to Pyruvic acid (Ser); by autocatalysis.

Belongs to the phosphatidylserine decarboxylase family. PSD-A subfamily. As to quaternary structure, heterodimer of a large membrane-associated beta subunit and a small pyruvoyl-containing alpha subunit. It depends on pyruvate as a cofactor. Post-translationally, is synthesized initially as an inactive proenzyme. Formation of the active enzyme involves a self-maturation process in which the active site pyruvoyl group is generated from an internal serine residue via an autocatalytic post-translational modification. Two non-identical subunits are generated from the proenzyme in this reaction, and the pyruvate is formed at the N-terminus of the alpha chain, which is derived from the carboxyl end of the proenzyme. The post-translation cleavage follows an unusual pathway, termed non-hydrolytic serinolysis, in which the side chain hydroxyl group of the serine supplies its oxygen atom to form the C-terminus of the beta chain, while the remainder of the serine residue undergoes an oxidative deamination to produce ammonia and the pyruvoyl prosthetic group on the alpha chain.

It localises to the cell membrane. It carries out the reaction a 1,2-diacyl-sn-glycero-3-phospho-L-serine + H(+) = a 1,2-diacyl-sn-glycero-3-phosphoethanolamine + CO2. It participates in phospholipid metabolism; phosphatidylethanolamine biosynthesis; phosphatidylethanolamine from CDP-diacylglycerol: step 2/2. Its function is as follows. Catalyzes the formation of phosphatidylethanolamine (PtdEtn) from phosphatidylserine (PtdSer). This Rickettsia akari (strain Hartford) protein is Phosphatidylserine decarboxylase proenzyme.